Consider the following 332-residue polypeptide: Gibberellin 2-beta-dioxygenase (332 aa).

In terms of domain architecture, Fe2OG dioxygenase spans 175–280 (KSDSCFRLNH…RLSMIYFGGP (106 aa)). 3 residues coordinate Fe cation: His-204, Asp-206, and His-261. Arg-271 is a catalytic residue.

Belongs to the iron/ascorbate-dependent oxidoreductase family. GA2OX subfamily. Fe cation serves as cofactor.

It catalyses the reaction gibberellin A1 + 2-oxoglutarate + O2 = gibberellin A8 + succinate + CO2. It functions in the pathway plant hormone biosynthesis; gibberellin biosynthesis. Functionally, catalyzes the 2-beta-hydroxylation of several biologically active gibberellins, leading to the homeostatic regulation of their endogenous level. Catabolism of gibberellins (GAs) plays a central role in plant development. Converts GA9/GA20 to GA51/GA29 and GA4/GA1 to GA34/GA8. The sequence is that of Gibberellin 2-beta-dioxygenase (GA2OX1) from Phaseolus coccineus (Scarlet runner bean).